The sequence spans 200 residues: Holliday junction branch migration complex subunit RuvA (200 aa).

The interval 1-65 is domain I; the sequence is MYEYIKGTLT…ETEHVLYGFS (65 aa). Residues 66 to 144 form a domain II region; sequence SRAEKECFRL…TLMPLYLEEP (79 aa). Residues 145-149 form a flexible linker region; that stretch reads VVPSS. The interval 150–200 is domain III; the sequence is TANSSFKEGIGALMNLGFSRLAADRMMTEAVKELSEEASVAELLPIALRKS.

The protein belongs to the RuvA family. As to quaternary structure, homotetramer. Forms an RuvA(8)-RuvB(12)-Holliday junction (HJ) complex. HJ DNA is sandwiched between 2 RuvA tetramers; dsDNA enters through RuvA and exits via RuvB. An RuvB hexamer assembles on each DNA strand where it exits the tetramer. Each RuvB hexamer is contacted by two RuvA subunits (via domain III) on 2 adjacent RuvB subunits; this complex drives branch migration. In the full resolvosome a probable DNA-RuvA(4)-RuvB(12)-RuvC(2) complex forms which resolves the HJ.

The protein localises to the cytoplasm. Its function is as follows. The RuvA-RuvB-RuvC complex processes Holliday junction (HJ) DNA during genetic recombination and DNA repair, while the RuvA-RuvB complex plays an important role in the rescue of blocked DNA replication forks via replication fork reversal (RFR). RuvA specifically binds to HJ cruciform DNA, conferring on it an open structure. The RuvB hexamer acts as an ATP-dependent pump, pulling dsDNA into and through the RuvAB complex. HJ branch migration allows RuvC to scan DNA until it finds its consensus sequence, where it cleaves and resolves the cruciform DNA. This Chlamydia trachomatis serovar A (strain ATCC VR-571B / DSM 19440 / HAR-13) protein is Holliday junction branch migration complex subunit RuvA.